The chain runs to 83 residues: Translational regulator CsrA (83 aa).

This sequence belongs to the CsrA/RsmA family. In terms of assembly, homodimer; the beta-strands of each monomer intercalate to form a hydrophobic core, while the alpha-helices form wings that extend away from the core.

The protein localises to the cytoplasm. Functionally, a translational regulator that binds mRNA to regulate translation initiation and/or mRNA stability. Usually binds in the 5'-UTR at or near the Shine-Dalgarno sequence preventing ribosome-binding, thus repressing translation. Its main target seems to be the major flagellin gene, while its function is anatagonized by FliW. This chain is Translational regulator CsrA, found in Thermotoga maritima (strain ATCC 43589 / DSM 3109 / JCM 10099 / NBRC 100826 / MSB8).